Consider the following 245-residue polypeptide: tRNA pseudouridine synthase A (245 aa).

Asp-52 (nucleophile) is an active-site residue. Tyr-111 serves as a coordination point for substrate.

Belongs to the tRNA pseudouridine synthase TruA family. In terms of assembly, homodimer.

The catalysed reaction is uridine(38/39/40) in tRNA = pseudouridine(38/39/40) in tRNA. Its function is as follows. Formation of pseudouridine at positions 38, 39 and 40 in the anticodon stem and loop of transfer RNAs. The protein is tRNA pseudouridine synthase A of Rickettsia prowazekii (strain Madrid E).